Consider the following 161-residue polypeptide: Transcriptional repressor NrdR (161 aa).

Residues 3-34 (CPFCGKYDTKVTDSRLVAEGDQVRRRRQCNDC) fold into a zinc finger. The ATP-cone domain maps to 49–139 (PRVIKGDGSR…VYRRFQDLDE (91 aa)).

Belongs to the NrdR family. The cofactor is Zn(2+).

Negatively regulates transcription of bacterial ribonucleotide reductase nrd genes and operons by binding to NrdR-boxes. The chain is Transcriptional repressor NrdR from Chromohalobacter salexigens (strain ATCC BAA-138 / DSM 3043 / CIP 106854 / NCIMB 13768 / 1H11).